Consider the following 328-residue polypeptide: Reticulocalbin-3 (328 aa).

The N-terminal stretch at 1 to 20 (MMWRWSFLLLLLLLRHWALG) is a signal peptide. Residues 24-48 (PDAGPHGQDRVHHGTPLSEAPHDDA) are disordered. EF-hand domains lie at 77–112 (QARL…TQQR), 113–148 (HIRD…HYEP), 163–198 (KMLA…EEFP), 200–235 (MRDI…EEPG), 241–276 (WVQT…PSQD), and 277–312 (QPLV…FVGS). Ca(2+)-binding residues include Asp92, Asp94, Trp96, Glu101, Asp126, Asp128, Asp130, Arg132, and Glu137. Asn140 carries N-linked (GlcNAc...) asparagine glycosylation. Ca(2+)-binding residues include Asp176, Asp178, Asp180, Met182, Glu187, Asp213, Asn215, Asp217, Tyr219, Glu224, Asp254, Asn256, Asp258, Arg260, Glu265, Asp290, Asp292, Asp294, Arg296, and Glu301. Positions 325 to 328 (HDEL) match the Prevents secretion from ER motif.

It belongs to the CREC family. As to quaternary structure, interacts with PCSK6 (immature form including the propeptide); probably involved in the maturation and the secretion of PCSK6. Post-translationally, degraded by PCSK6 and other endoproteases including FURIN and PCSK5. In terms of processing, N-glycosylated. In terms of tissue distribution, highly expressed in lung and heart. Also detected in liver, spleen, kidney, skeletal muscle, intestine, stomach, and brain.

It localises to the endoplasmic reticulum lumen. Its function is as follows. Probable molecular chaperone assisting protein biosynthesis and transport in the endoplasmic reticulum. Required for the proper biosynthesis and transport of pulmonary surfactant-associated protein A/SP-A, pulmonary surfactant-associated protein D/SP-D and the lipid transporter ABCA3. By regulating both the proper expression and the degradation through the endoplasmic reticulum-associated protein degradation pathway of these proteins plays a crucial role in pulmonary surfactant homeostasis. Has an anti-fibrotic activity by negatively regulating the secretion of type I and type III collagens. This calcium-binding protein also transiently associates with immature PCSK6 and regulates its secretion. The protein is Reticulocalbin-3 of Mus musculus (Mouse).